The sequence spans 166 residues: Plastocyanin, chloroplastic (166 aa).

The N-terminal 67 residues, 1 to 67, are a transit peptide targeting the chloroplast; sequence MASLTSAAVT…GAVLASNALA (67 aa). The 99-residue stretch at 68–166 folds into the Plastocyanin-like domain; the sequence is VEVLLGGSDG…AGMAGKITVN (99 aa). Residues His104, Cys151, His154, and Met159 each contribute to the Cu cation site.

The protein belongs to the plastocyanin family. Requires Cu(2+) as cofactor.

It is found in the plastid. It localises to the chloroplast thylakoid membrane. Participates in electron transfer between P700 and the cytochrome b6-f complex in photosystem I. The chain is Plastocyanin, chloroplastic (PETE) from Fritillaria agrestis (Stinkbells).